We begin with the raw amino-acid sequence, 531 residues long: Phosphoinositide phospholipase C 9 (531 aa).

Positions 107–253 (RDMNAPLSHY…LQNKILISRR (147 aa)) constitute a PI-PLC X-box domain. The region spanning 265 to 385 (ENGVELEIQE…GYVKKPNFLL (121 aa)) is the PI-PLC Y-box domain. S276 is modified (phosphoserine). The 128-residue stretch at 386 to 513 (NAGSSGVFYP…EGIRAVPLYD (128 aa)) folds into the C2 domain.

Requires Ca(2+) as cofactor. Expressed in leaves, roots, flowers and siliques.

It localises to the cell membrane. The catalysed reaction is a 1,2-diacyl-sn-glycero-3-phospho-(1D-myo-inositol-4,5-bisphosphate) + H2O = 1D-myo-inositol 1,4,5-trisphosphate + a 1,2-diacyl-sn-glycerol + H(+). Its function is as follows. The production of the second messenger molecules diacylglycerol (DAG) and inositol 1,4,5-trisphosphate (IP3) is mediated by activated phosphatidylinositol-specific phospholipase C enzymes. The polypeptide is Phosphoinositide phospholipase C 9 (PLC9) (Arabidopsis thaliana (Mouse-ear cress)).